The primary structure comprises 257 residues: Geranylgeranylglyceryl phosphate synthase (257 aa).

Residues Asp-27 and Thr-57 each coordinate Mg(2+). Residues 175–181 (YLEAGSG), 207–208 (GG), and 229–230 (GN) contribute to the sn-glycerol 1-phosphate site.

Belongs to the GGGP/HepGP synthase family. Group II subfamily. Requires Mg(2+) as cofactor.

It is found in the cytoplasm. The enzyme catalyses sn-glycerol 1-phosphate + (2E,6E,10E)-geranylgeranyl diphosphate = sn-3-O-(geranylgeranyl)glycerol 1-phosphate + diphosphate. Its pathway is membrane lipid metabolism; glycerophospholipid metabolism. In terms of biological role, prenyltransferase that catalyzes the transfer of the geranylgeranyl moiety of geranylgeranyl diphosphate (GGPP) to the C3 hydroxyl of sn-glycerol-1-phosphate (G1P). This reaction is the first ether-bond-formation step in the biosynthesis of archaeal membrane lipids. The chain is Geranylgeranylglyceryl phosphate synthase from Sulfolobus acidocaldarius (strain ATCC 33909 / DSM 639 / JCM 8929 / NBRC 15157 / NCIMB 11770).